The primary structure comprises 311 residues: Methionyl-tRNA formyltransferase (311 aa).

A (6S)-5,6,7,8-tetrahydrofolate-binding site is contributed by 109-112 (SLLP).

This sequence belongs to the Fmt family.

The enzyme catalyses L-methionyl-tRNA(fMet) + (6R)-10-formyltetrahydrofolate = N-formyl-L-methionyl-tRNA(fMet) + (6S)-5,6,7,8-tetrahydrofolate + H(+). Its function is as follows. Attaches a formyl group to the free amino group of methionyl-tRNA(fMet). The formyl group appears to play a dual role in the initiator identity of N-formylmethionyl-tRNA by promoting its recognition by IF2 and preventing the misappropriation of this tRNA by the elongation apparatus. The polypeptide is Methionyl-tRNA formyltransferase (Marinobacter nauticus (strain ATCC 700491 / DSM 11845 / VT8) (Marinobacter aquaeolei)).